We begin with the raw amino-acid sequence, 686 residues long: Disintegrin and metalloproteinase domain-containing protein 17 homolog (686 aa).

Residues 1 to 21 (MKIQDRSLLIFLVLGILKSDA) form the signal peptide. Positions 22-177 (FNTRVKRHAP…RRAIAIPSDR (156 aa)) are excised as a propeptide. Residues Asn-59, Asn-206, and Asn-262 are each glycosylated (N-linked (GlcNAc...) asparagine). At 178–637 (RKDVLNVKRN…TGGVLEFIKT (460 aa)) the chain is on the extracellular side. The region spanning 187 to 445 (NRCTLKLVAD…KWESCFQEEM (259 aa)) is the Peptidase M12B domain. 2 cysteine pairs are disulfide-bonded: Cys-328–Cys-440 and Cys-394–Cys-424. His-370 serves as a coordination point for Zn(2+). Residue Glu-371 is part of the active site. His-374 and His-380 together coordinate Zn(2+). In terms of domain architecture, Disintegrin spans 446 to 535 (TSFCGNGIVE…ECPSAPPVRD (90 aa)). N-linked (GlcNAc...) asparagine glycosylation is present at Asn-501. A disulfide bond links Cys-506 and Cys-527. The N-linked (GlcNAc...) asparagine glycan is linked to Asn-581. A helical transmembrane segment spans residues 638 to 658 (HIVVIAIIFFTLIFVGIYKIV). The Cytoplasmic portion of the chain corresponds to 659–686 (KYGENFTEKVTHKTAGGCRSVFVKADVN).

The cofactor is Zn(2+).

It is found in the cell membrane. Its function is as follows. Metalloprotease. Acts together with protease sup-17 to facilitate lin-12/Notch signaling during developmental cell fate decision, including anchor cell/ventral uterine precursor cell decision. By modulating glp-1/Notch signaling, plays a role in germline development. In Caenorhabditis elegans, this protein is Disintegrin and metalloproteinase domain-containing protein 17 homolog.